We begin with the raw amino-acid sequence, 308 residues long: Cysteine proteinase 3 (308 aa).

The first 13 residues, 1–13 (MFALILFVSLACA), serve as a signal peptide directing secretion. Positions 14–92 (NEVAFKQWAA…TSNVKAAVKA (79 aa)) are cleaved as a propeptide — activation peptide. Intrachain disulfides connect Cys-112–Cys-153 and Cys-146–Cys-186. Cys-115 is a catalytic residue. Catalysis depends on residues His-251 and Asn-271.

The protein belongs to the peptidase C1 family.

The protein resides in the cytoplasm. The protein localises to the cytoplasmic vesicle. It localises to the phagosome. It carries out the reaction Hydrolysis of proteins, including basement membrane collagen and azocasein. Preferential cleavage: Arg-Arg-|-Xaa in small molecule substrates including Z-Arg-Arg-|-NHMec.. Functionally, cysteine protease which may be involved in pathogenicity. This is Cysteine proteinase 3 from Entamoeba histolytica (strain ATCC 30459 / HM-1:IMSS / ABRM).